The primary structure comprises 324 residues: COP9 signalosome complex subunit 6 (324 aa).

Positions 38-171 (VALHPLVILN…VSVFESVIDI (134 aa)) constitute an MPN domain.

Belongs to the peptidase M67A family. CSN6 subfamily. As to quaternary structure, component of the CSN complex, composed of COPS1/GPS1, COPS2, COPS3, COPS4, COPS5, COPS6, COPS7 (COPS7A or COPS7B), COPS8 and COPS9. In the complex, it probably interacts directly with COPS2, COPS4, COPS5, COPS7 (COPS7A or COPS7B) and COPS9. Interacts with the translation initiation factor EIF3S6. Interacts weakly with RBX1. Directly interacts with COP1 and 14-3-3 protein sigma/SFN. Interacts with ERCC6.

The protein localises to the cytoplasm. The protein resides in the nucleus. Functionally, component of the COP9 signalosome complex (CSN), a complex involved in various cellular and developmental processes. The CSN complex is an essential regulator of the ubiquitin (Ubl) conjugation pathway by mediating the deneddylation of the cullin subunits of SCF-type E3 ligase complexes, leading to decrease the Ubl ligase activity of SCF-type complexes such as SCF, CSA or DDB2. The complex is also involved in phosphorylation of p53/TP53, c-jun/JUN, IkappaBalpha/NFKBIA, ITPK1 and IRF8, possibly via its association with CK2 and PKD kinases. CSN-dependent phosphorylation of TP53 and JUN promotes and protects degradation by the Ubl system, respectively. Has some glucocorticoid receptor-responsive activity. Stabilizes COP1 through reducing COP1 auto-ubiquitination and decelerating COP1 turnover rate, hence regulates the ubiquitination of COP1 targets, including SFN. In Mus musculus (Mouse), this protein is COP9 signalosome complex subunit 6 (Cops6).